The sequence spans 809 residues: Chloride channel protein F (809 aa).

Topologically, residues 1–65 (MSTSKYSKMI…SWAKFARLNN (65 aa)) are cytoplasmic. 11 helical membrane passes run 66–86 (FYIWLFLAAVGLLGSIYLVAV), 110–130 (LQYLSFIAWTVALATGSCFII), 152–172 (FWNPFVVAPMVLLWKTIGLLL), 218–238 (AACCALGVAATFGSPIGGVLF), 246–266 (FYLISNYWRAFFTATVGAVGI), 295–315 (LIAFIILGVLCGLLASLFISL), 333–353 (ITPFGEVIIVAAATAILSFPL), 395–415 (GIILACFLYVVVKLVLTAVSI), 425–445 (IPLFAIGSAVGRFVGELMLVL), 459–479 (VVGAAALCGGATRTVSSAMII), and 486–506 (LTYMVPVLLGVVLSCGIGNLL). A CBS 1 domain is found at 539-597 (MKRDLYYVCQNTTLSQISNLLKRVDEHSIPVVSSDNDLQLIGTISTTTLEEVIAYHERL). Disordered regions lie at residues 604 to 646 (PLSL…NNQN) and 692 to 729 (NNNFSDNNNNYNNNNYNNNNNNNNDNNTNNDNNINNNS). Residues 620–646 (NDNINNNQNNNNNNNNNNNNNNSNNQN) are compositionally biased toward low complexity. The region spanning 756 to 809 (IDSSPFQIQETMPVRKIVFMFMMLGGNILYVTNKGKLTGVVAKTELVHQNNNKH) is the CBS 2 domain.

The protein belongs to the chloride channel (TC 2.A.49) family.

The protein localises to the membrane. Its function is as follows. Voltage-gated chloride channel. Chloride channels may have several functions including the regulation of cell volume, membrane potential stabilization and signal transduction. This is Chloride channel protein F (clcF) from Dictyostelium discoideum (Social amoeba).